The chain runs to 233 residues: UPF0502 protein Sden_2282 (233 aa).

Residues 178-198 (TQHQRPPQTPHLSSRTNVDNS) show a composition bias toward polar residues. The interval 178–204 (TQHQRPPQTPHLSSRTNVDNSYESDER) is disordered.

This sequence belongs to the UPF0502 family.

In Shewanella denitrificans (strain OS217 / ATCC BAA-1090 / DSM 15013), this protein is UPF0502 protein Sden_2282.